The chain runs to 61 residues: MAKKSMIAKAQRKPKFQVRAYTRCRICGRPHSVYRDFGLCRVCLRKMASEGLIPGLRKASW.

Zn(2+)-binding residues include C24, C27, C40, and C43.

The protein belongs to the universal ribosomal protein uS14 family. Zinc-binding uS14 subfamily. Part of the 30S ribosomal subunit. Contacts proteins S3 and S10. The cofactor is Zn(2+).

Its function is as follows. Binds 16S rRNA, required for the assembly of 30S particles and may also be responsible for determining the conformation of the 16S rRNA at the A site. This chain is Small ribosomal subunit protein uS14, found in Helicobacter pylori (strain J99 / ATCC 700824) (Campylobacter pylori J99).